We begin with the raw amino-acid sequence, 783 residues long: Endonuclease MutS2 (783 aa).

328–335 (GPNTGGKT) contacts ATP. The region spanning 708–783 (LDLRGKRYEE…GSGCTIATLG (76 aa)) is the Smr domain.

The protein belongs to the DNA mismatch repair MutS family. MutS2 subfamily. As to quaternary structure, homodimer. Binds to stalled ribosomes, contacting rRNA.

Its function is as follows. Endonuclease that is involved in the suppression of homologous recombination and thus may have a key role in the control of bacterial genetic diversity. Functionally, acts as a ribosome collision sensor, splitting the ribosome into its 2 subunits. Detects stalled/collided 70S ribosomes which it binds and splits by an ATP-hydrolysis driven conformational change. Acts upstream of the ribosome quality control system (RQC), a ribosome-associated complex that mediates the extraction of incompletely synthesized nascent chains from stalled ribosomes and their subsequent degradation. Probably generates substrates for RQC. This is Endonuclease MutS2 from Streptococcus thermophilus (strain CNRZ 1066).